The primary structure comprises 326 residues: Phosphotriesterase homology protein (326 aa).

The Zn(2+) site is built by His-22, His-24, Lys-145, His-178, His-207, and Asp-264. Lys-145 is modified (N6-carboxylysine).

The protein belongs to the metallo-dependent hydrolases superfamily. Phosphotriesterase family. Zn(2+) serves as cofactor.

This chain is Phosphotriesterase homology protein (php), found in Mycobacterium tuberculosis (strain CDC 1551 / Oshkosh).